The chain runs to 221 residues: Lactate racemization regulatory protein (221 aa).

The 75-residue stretch at 139–213 folds into the HTH crp-type domain; the sequence is NGKKGAICAF…NHKFIIQDVS (75 aa). The H-T-H motif DNA-binding region spans 172–192; it reads NDDIAGFCGISSRSSVNRMLK.

As to quaternary structure, multimerizes on DNA. Multimerization is required for transcription activation.

L-lactate acts as a positive effector on the binding and multimerization of LarR on DNA, while D-lactate antagonizes the positive effect of L-lactate. Functionally, positive transcriptional regulator that is absolutely required for the expression of lactate racemase (Lar) activity. Controls Lar expression by sensing the L-/D-lactate ration. Binds to a 16-bp palindromic sequence (Lar box motif) that is present in the larR-larA intergenic region, allowing transcription of the larABCDE operon. This is Lactate racemization regulatory protein from Lactiplantibacillus plantarum (strain ATCC BAA-793 / NCIMB 8826 / WCFS1) (Lactobacillus plantarum).